The following is a 1274-amino-acid chain: Clustered mitochondria protein homolog (1274 aa).

The disordered stretch occupies residues 1 to 53 (MAQTNGELEHSKGMSSPAVRISQAQKSTKLTVDPESPEQVANGTHAEGEQPEE). TPR repeat units lie at residues 293 to 326 (SPSF…PNNP), 510 to 543 (DYGG…KKHP), and 628 to 661 (AKEA…ERVD). In terms of domain architecture, Clu spans 342–586 (DITRSQENYL…RVTPLDVMWQ (245 aa)). 2 disordered regions span residues 631 to 655 (AAKK…EEAL) and 893 to 925 (VSNG…ARAA). 4 TPR repeats span residues 998-1031 (AKLY…TERT), 1040-1073 (ILSY…WKII), 1082-1115 (ITTM…CESL), and 1124-1157 (ATIL…FLQQ). The segment at 1197-1274 (INMTPRTLGT…KLRGSKKSSA (78 aa)) is disordered. Positions 1200–1217 (TPRTLGTRVQPQVGQTAP) are enriched in polar residues.

Belongs to the CLU family. As to quaternary structure, may associate with the eukaryotic translation initiation factor 3 (eIF-3) complex.

Its subcellular location is the cytoplasm. Its function is as follows. mRNA-binding protein involved in proper cytoplasmic distribution of mitochondria. In Aspergillus terreus (strain NIH 2624 / FGSC A1156), this protein is Clustered mitochondria protein homolog.